Consider the following 241-residue polypeptide: Pyrroloquinoline-quinone synthase (241 aa).

The protein belongs to the PqqC family.

It catalyses the reaction 6-(2-amino-2-carboxyethyl)-7,8-dioxo-1,2,3,4,7,8-hexahydroquinoline-2,4-dicarboxylate + 3 O2 = pyrroloquinoline quinone + 2 H2O2 + 2 H2O + H(+). Its pathway is cofactor biosynthesis; pyrroloquinoline quinone biosynthesis. In terms of biological role, ring cyclization and eight-electron oxidation of 3a-(2-amino-2-carboxyethyl)-4,5-dioxo-4,5,6,7,8,9-hexahydroquinoline-7,9-dicarboxylic-acid to PQQ. The protein is Pyrroloquinoline-quinone synthase of Ruegeria pomeroyi (strain ATCC 700808 / DSM 15171 / DSS-3) (Silicibacter pomeroyi).